The chain runs to 269 residues: Aminodeoxychorismate lyase (269 aa).

At Lys140 the chain carries N6-(pyridoxal phosphate)lysine.

The protein belongs to the class-IV pyridoxal-phosphate-dependent aminotransferase family. As to quaternary structure, homodimer. Pyridoxal 5'-phosphate is required as a cofactor.

It catalyses the reaction 4-amino-4-deoxychorismate = 4-aminobenzoate + pyruvate + H(+). Its pathway is cofactor biosynthesis; tetrahydrofolate biosynthesis; 4-aminobenzoate from chorismate: step 2/2. Its function is as follows. Involved in the biosynthesis of p-aminobenzoate (PABA), a precursor of tetrahydrofolate. Converts 4-amino-4-deoxychorismate into 4-aminobenzoate (PABA) and pyruvate. The polypeptide is Aminodeoxychorismate lyase (pabC) (Escherichia coli (strain K12)).